A 595-amino-acid chain; its full sequence is Aspartate--tRNA(Asp/Asn) ligase (595 aa).

Residue glutamate 175 coordinates L-aspartate. The interval 199-202 is aspartate; sequence QQYK. L-aspartate contacts are provided by arginine 221 and histidine 454. An ATP-binding site is contributed by 221-223; that stretch reads RDE. Residue glutamate 488 coordinates ATP. Arginine 495 is an L-aspartate binding site. Position 540-543 (540-543) interacts with ATP; it reads GIDR.

The protein belongs to the class-II aminoacyl-tRNA synthetase family. Type 1 subfamily. In terms of assembly, homodimer.

The protein localises to the cytoplasm. The enzyme catalyses tRNA(Asx) + L-aspartate + ATP = L-aspartyl-tRNA(Asx) + AMP + diphosphate. Aspartyl-tRNA synthetase with relaxed tRNA specificity since it is able to aspartylate not only its cognate tRNA(Asp) but also tRNA(Asn). Reaction proceeds in two steps: L-aspartate is first activated by ATP to form Asp-AMP and then transferred to the acceptor end of tRNA(Asp/Asn). This is Aspartate--tRNA(Asp/Asn) ligase from Brucella canis (strain ATCC 23365 / NCTC 10854 / RM-666).